Consider the following 241-residue polypeptide: ATP synthase subunit a (241 aa).

5 consecutive transmembrane segments (helical) span residues 30-50 (GQVF…VVVG), 91-111 (FIGT…LVPW), 128-148 (INTT…AGLS), 193-213 (LVVA…VMFL), and 214-234 (GLFT…YYIG).

It belongs to the ATPase A chain family. F-type ATPases have 2 components, CF(1) - the catalytic core - and CF(0) - the membrane proton channel. CF(1) has five subunits: alpha(3), beta(3), gamma(1), delta(1), epsilon(1). CF(0) has four main subunits: a, b, b' and c.

It is found in the cellular thylakoid membrane. In terms of biological role, key component of the proton channel; it plays a direct role in the translocation of protons across the membrane. This Prochlorococcus marinus (strain MIT 9303) protein is ATP synthase subunit a.